A 501-amino-acid polypeptide reads, in one-letter code: Glutamate--tRNA ligase (501 aa).

Positions 10–20 match the 'HIGH' region motif; the sequence is PSPTGSLHIGG. The short motif at 251–255 is the 'KMSKS' region element; sequence KLSKR. Residue lysine 254 participates in ATP binding.

The protein belongs to the class-I aminoacyl-tRNA synthetase family. Glutamate--tRNA ligase type 1 subfamily. In terms of assembly, monomer.

It localises to the cytoplasm. The catalysed reaction is tRNA(Glu) + L-glutamate + ATP = L-glutamyl-tRNA(Glu) + AMP + diphosphate. Functionally, catalyzes the attachment of glutamate to tRNA(Glu) in a two-step reaction: glutamate is first activated by ATP to form Glu-AMP and then transferred to the acceptor end of tRNA(Glu). This Desulforudis audaxviator (strain MP104C) protein is Glutamate--tRNA ligase.